A 460-amino-acid chain; its full sequence is Cysteine--tRNA ligase (460 aa).

Cys-28 is a binding site for Zn(2+). Residues Met-30–His-40 carry the 'HIGH' region motif. Zn(2+)-binding residues include Cys-209, His-234, and Glu-238. Positions Lys-266–Ser-270 match the 'KMSKS' region motif. Lys-269 contributes to the ATP binding site.

This sequence belongs to the class-I aminoacyl-tRNA synthetase family. As to quaternary structure, monomer. Zn(2+) serves as cofactor.

It is found in the cytoplasm. It carries out the reaction tRNA(Cys) + L-cysteine + ATP = L-cysteinyl-tRNA(Cys) + AMP + diphosphate. The chain is Cysteine--tRNA ligase from Pseudomonas putida (strain ATCC 47054 / DSM 6125 / CFBP 8728 / NCIMB 11950 / KT2440).